A 237-amino-acid polypeptide reads, in one-letter code: 3-oxoacyl-[acyl-carrier-protein] reductase (237 aa).

The residue at position 1 (Met-1) is an N-acetylmethionine. NADP(+) is bound by residues 11 to 14 (SRGI), 34 to 35 (RN), Asp-56, and 83 to 85 (AAG). Ser-135 provides a ligand contact to substrate. NADP(+) is bound by residues Tyr-148, Lys-152, and 181-183 (IHT). Tyr-148 acts as the Proton acceptor in catalysis. The residue at position 195 (Lys-195) is an N6-acetyllysine.

The protein belongs to the short-chain dehydrogenases/reductases (SDR) family. Homotetramer (in vitro). Heterotetramer with HSD17B8; contains two molecules each of HSD17B8 and CBR4. Does not form homotetramers when HSD17B8 is coexpressed, only heterotetramers (in vitro).

It is found in the mitochondrion matrix. It catalyses the reaction a (3R)-hydroxyacyl-[ACP] + NADP(+) = a 3-oxoacyl-[ACP] + NADPH + H(+). It carries out the reaction a quinone + NADPH + H(+) = a quinol + NADP(+). It functions in the pathway lipid metabolism; fatty acid biosynthesis. In terms of biological role, component of the heterotetramer complex KAR (3-ketoacyl-[acyl carrier protein] reductase or 3-ketoacyl-[ACP] reductase) that forms part of the mitochondrial fatty acid synthase (mtFAS). Beta-subunit of the KAR heterotetramer complex, responsible for the 3-ketoacyl-ACP reductase activity of the mtFAS, reduces 3-oxoacyl-[ACP] to (3R)-hydroxyacyl-[ACP] in a NADPH-dependent manner with no chain length preference, thereby participating in mitochondrial fatty acid biosynthesis. The homotetramer has NADPH-dependent quinone reductase activity (in vitro), hence could play a role in protection against cytotoxicity of exogenous quinones. As a heterotetramer, it can also reduce 9,10-phenanthrenequinone, 1,4-benzoquinone and various other o-quinones and p-quinones (in vitro). The polypeptide is 3-oxoacyl-[acyl-carrier-protein] reductase (CBR4) (Bos taurus (Bovine)).